The primary structure comprises 329 residues: GTPase Obg (329 aa).

Residues 1-159 (MQFIDQARIT…WPLQLELKLL (159 aa)) enclose the Obg domain. Residues 160–328 (AEVGIIGLPN…LLDQVWQLLG (169 aa)) form the OBG-type G domain. ATP-binding positions include 166–173 (GLPNAGKS), 191–195 (FTTLV), 213–216 (DIPG), 280–283 (NKLE), and 309–311 (SAV). Residues Ser173 and Thr193 each coordinate Mg(2+).

Belongs to the TRAFAC class OBG-HflX-like GTPase superfamily. OBG GTPase family. Monomer. Mg(2+) is required as a cofactor.

The protein resides in the cytoplasm. In terms of biological role, an essential GTPase which binds GTP, GDP and possibly (p)ppGpp with moderate affinity, with high nucleotide exchange rates and a fairly low GTP hydrolysis rate. Plays a role in control of the cell cycle, stress response, ribosome biogenesis and in those bacteria that undergo differentiation, in morphogenesis control. The sequence is that of GTPase Obg from Synechococcus sp. (strain WH7803).